The primary structure comprises 179 residues: Large ribosomal subunit protein uL5 (179 aa).

The protein belongs to the universal ribosomal protein uL5 family. In terms of assembly, part of the 50S ribosomal subunit; part of the 5S rRNA/L5/L18/L25 subcomplex. Contacts the 5S rRNA and the P site tRNA. Forms a bridge to the 30S subunit in the 70S ribosome.

This is one of the proteins that bind and probably mediate the attachment of the 5S RNA into the large ribosomal subunit, where it forms part of the central protuberance. In the 70S ribosome it contacts protein S13 of the 30S subunit (bridge B1b), connecting the 2 subunits; this bridge is implicated in subunit movement. Contacts the P site tRNA; the 5S rRNA and some of its associated proteins might help stabilize positioning of ribosome-bound tRNAs. The polypeptide is Large ribosomal subunit protein uL5 (Pseudomonas putida (strain ATCC 700007 / DSM 6899 / JCM 31910 / BCRC 17059 / LMG 24140 / F1)).